Here is a 436-residue protein sequence, read N- to C-terminus: Adenylosuccinate synthetase (436 aa).

Residues 13–19 (GDEGKGK) and 41–43 (GHT) each bind GTP. The active-site Proton acceptor is the Asp14. Residues Asp14 and Gly41 each coordinate Mg(2+). IMP contacts are provided by residues 14-17 (DEGK), 39-42 (NAGH), Thr130, Arg144, Gln225, Thr240, and Arg304. His42 serves as the catalytic Proton donor. Residue 300-306 (ATTGRSR) coordinates substrate. Residues Arg306, 332 to 334 (KLD), and 415 to 417 (STG) each bind GTP.

This sequence belongs to the adenylosuccinate synthetase family. In terms of assembly, homodimer. Mg(2+) serves as cofactor.

It localises to the cytoplasm. The catalysed reaction is IMP + L-aspartate + GTP = N(6)-(1,2-dicarboxyethyl)-AMP + GDP + phosphate + 2 H(+). The protein operates within purine metabolism; AMP biosynthesis via de novo pathway; AMP from IMP: step 1/2. Plays an important role in the de novo pathway of purine nucleotide biosynthesis. Catalyzes the first committed step in the biosynthesis of AMP from IMP. This Hamiltonella defensa subsp. Acyrthosiphon pisum (strain 5AT) protein is Adenylosuccinate synthetase.